The primary structure comprises 741 residues: MAASVPEPRLLLLLLLLLPPLPPVTSASDRPRGANPVNPDKLLVITVATAETEGYRRFLQSAEFFNYTVRTLGLGQEWRGGDVARTVGGGQKVRWLKKEMEKYASQEDMIIMFVDSYDVILASSPTELLKKFVQSGSHLLFSAESFCWPDWGLAEQYPEVGVGKRFLNSGGFIGFAPTIHRIVRQWKYKDDDDDQLFYTQLYLDPGLREKLKLSLDHKSRIFQNLNGALDEVVLKFDQNRVRIRNVAYDTLPVVVHGNGPTKLQLNYLGNYVPNGWTPQGGCGFCNLNRRTLPGGQPPPRVLLAVFVEQPTPFLPRFLQRLLLLDYPPDRISLFLHNNEVYHEPHIADAWPQLQDHFSAVKLVGPEEALSSGEARDMAMDSCRQNPECEFYFSLDADAVLTNPETLRILIEQNRKVIAPMLSRHGKLWSNFWGALSPDEYYARSEDYVELVQRKRVGLWNVPYISQAYVIRGETLRTELPEKEVFSSSDTDPDMAFCRSVRDKGIFLHLSNQHEFGRLLSTSHYDTDHLHPDLWQIFDNPVDWREQYIHENYSRALDGEGLVEQPCPDVYWFPLLTEQMCDELVEEMEHYGQWSGGRHEDSRLAGGYENVPTVDIHMKQVGYEDQWLQLLRTYVGPMTEHLFPGYHTKTRAVMNFVVRYRPDEQPSLRPHHDSSTFTLNVALNHKGVDYEGGGCRFLRYDCRVSSPRKGWALLHPGRLTHYHEGLPTTRGTRYIMVSFVDP.

Positions 1 to 27 (MAASVPEPRLLLLLLLLLPPLPPVTSA) are cleaved as a signal peptide. The segment at 28–293 (SDRPRGANPV…FCNLNRRTLP (266 aa)) is required for glycosyltransferase activity. 47–49 (VAT) provides a ligand contact to UDP. Asn66 is a glycosylation site (N-linked (GlcNAc...) asparagine). 3 residues coordinate Mn(2+): Asp115, Asp118, and His256. Residue 115 to 117 (DSY) coordinates UDP. 259–262 (GPTK) serves as a coordination point for UDP. Cystine bridges form between Cys282–Cys285 and Cys382–Cys388. An accessory region region spans residues 298 to 523 (PPRVLLAVFV…EFGRLLSTSH (226 aa)). The N-linked (GlcNAc...) asparagine glycan is linked to Asn551. Cys566 and Cys701 are joined by a disulfide. Residues Arg602 and Tyr659 each contribute to the 2-oxoglutarate site. Positions 650-741 (RAVMNFVVRY…RYIMVSFVDP (92 aa)) constitute a Fe2OG dioxygenase domain. Residues His670 and Asp672 each contribute to the Fe cation site. Positions 675-718 (TFTLNVALNHKGVDYEGGGCRFLRYDCRVSSPRKGWALLHPGRL) are important for dimerization. Asn679 contacts 2-oxoglutarate. His722 contacts Fe cation. Residue Arg732 participates in 2-oxoglutarate binding.

As to quaternary structure, homodimer. The cofactor is Fe(2+). It depends on L-ascorbate as a cofactor. Mn(2+) serves as cofactor. As to expression, detected in heart and bone.

The protein resides in the rough endoplasmic reticulum. Its subcellular location is the endoplasmic reticulum lumen. The protein localises to the endoplasmic reticulum membrane. It localises to the secreted. It is found in the extracellular space. It catalyses the reaction L-lysyl-[collagen] + 2-oxoglutarate + O2 = (5R)-5-hydroxy-L-lysyl-[collagen] + succinate + CO2. It carries out the reaction (5R)-5-hydroxy-L-lysyl-[collagen] + UDP-alpha-D-galactose = (5R)-5-O-(beta-D-galactosyl)-5-hydroxy-L-lysyl-[collagen] + UDP + H(+). The catalysed reaction is (5R)-5-O-(beta-D-galactosyl)-5-hydroxy-L-lysyl-[collagen] + UDP-alpha-D-glucose = (5R)-5-O-[alpha-D-glucosyl-(1-&gt;2)-beta-D-galactosyl]-5-hydroxy-L-lysyl-[collagen] + UDP + H(+). Its function is as follows. Multifunctional enzyme that catalyzes a series of post-translational modifications on Lys residues in procollagen. Plays a redundant role in catalyzing the formation of hydroxylysine residues in -Xaa-Lys-Gly- sequences in collagens. Plays a redundant role in catalyzing the transfer of galactose onto hydroxylysine groups, giving rise to galactosyl 5-hydroxylysine. Has an essential role by catalyzing the subsequent transfer of glucose moieties, giving rise to 1,2-glucosylgalactosyl-5-hydroxylysine residues. Catalyzes hydroxylation and glycosylation of Lys residues in the MBL1 collagen-like domain, giving rise to hydroxylysine and 1,2-glucosylgalactosyl-5-hydroxylysine residues. Catalyzes hydroxylation and glycosylation of Lys residues in the ADIPOQ collagen-like domain, giving rise to hydroxylysine and 1,2-glucosylgalactosyl-5-hydroxylysine residues. Essential for normal biosynthesis and secretion of type IV collagens. Essential for normal formation of basement membranes. The sequence is that of Multifunctional procollagen lysine hydroxylase and glycosyltransferase LH3 (Plod3) from Rattus norvegicus (Rat).